The sequence spans 442 residues: tRNA modification GTPase MnmE (442 aa).

3 residues coordinate (6S)-5-formyl-5,6,7,8-tetrahydrofolate: R22, E79, and K119. Positions 216 to 366 constitute a TrmE-type G domain; that stretch reads GIKTCLVGAP…LLEKIKSIFA (151 aa). N226 provides a ligand contact to K(+). GTP is bound by residues 226-231, 245-251, and 270-273; these read NSGKSS, SEIPGTT, and DTAG. Residue S230 participates in Mg(2+) binding. K(+)-binding residues include S245, I247, and T250. Residue T251 participates in Mg(2+) binding. K442 is a binding site for (6S)-5-formyl-5,6,7,8-tetrahydrofolate.

Belongs to the TRAFAC class TrmE-Era-EngA-EngB-Septin-like GTPase superfamily. TrmE GTPase family. In terms of assembly, homodimer. Heterotetramer of two MnmE and two MnmG subunits. K(+) is required as a cofactor.

It is found in the cytoplasm. In terms of biological role, exhibits a very high intrinsic GTPase hydrolysis rate. Involved in the addition of a carboxymethylaminomethyl (cmnm) group at the wobble position (U34) of certain tRNAs, forming tRNA-cmnm(5)s(2)U34. This Mesomycoplasma hyopneumoniae (strain J / ATCC 25934 / NCTC 10110) (Mycoplasma hyopneumoniae) protein is tRNA modification GTPase MnmE.